Here is a 199-residue protein sequence, read N- to C-terminus: Translation initiation factor IF-3 (199 aa).

Belongs to the IF-3 family. Monomer.

Its subcellular location is the cytoplasm. In terms of biological role, IF-3 binds to the 30S ribosomal subunit and shifts the equilibrium between 70S ribosomes and their 50S and 30S subunits in favor of the free subunits, thus enhancing the availability of 30S subunits on which protein synthesis initiation begins. In Mycoplasmopsis pulmonis (strain UAB CTIP) (Mycoplasma pulmonis), this protein is Translation initiation factor IF-3.